Reading from the N-terminus, the 839-residue chain is Molybdenum cofactor sulfurase (839 aa).

K237 bears the N6-(pyridoxal phosphate)lysine mark. C401 is an active-site residue. Residues 651-662 (DQNYSQKQSPSM) show a composition bias toward polar residues. The interval 651-678 (DQNYSQKQSPSMPGSFPQAPSSPDPYPT) is disordered. Residues 656–834 (QKQSPSMPGS…IMVGDAVTPS (179 aa)) enclose the MOSC domain.

The protein belongs to the class-V pyridoxal-phosphate-dependent aminotransferase family. MOCOS subfamily. The cofactor is pyridoxal 5'-phosphate.

The catalysed reaction is Mo-molybdopterin + L-cysteine + AH2 = thio-Mo-molybdopterin + L-alanine + A + H2O. Its pathway is cofactor biosynthesis; molybdopterin biosynthesis. Functionally, sulfurates the molybdenum cofactor. Sulfation of molybdenum is essential for xanthine dehydrogenase (XDH) and aldehyde oxidase (ADO) enzymes in which molybdenum cofactor is liganded by 1 oxygen and 1 sulfur atom in active form. This chain is Molybdenum cofactor sulfurase, found in Emericella nidulans (strain FGSC A4 / ATCC 38163 / CBS 112.46 / NRRL 194 / M139) (Aspergillus nidulans).